Reading from the N-terminus, the 360-residue chain is Mannan endo-1,4-beta-mannosidase (360 aa).

Residues 1-24 form the signal peptide; it reads MLKKLAVCLSIVLLLLGAASPISA. One can recognise a GH26 domain in the interval 36-347; sequence QTTKDIMNWL…YQNSWTLNKG (312 aa). Substrate is bound at residue H129. The Proton donor role is filled by E191. Residues W196 and Y266 each coordinate substrate. E290 (nucleophile) is an active-site residue.

Belongs to the glycosyl hydrolase 26 family. Homodimer.

The protein localises to the secreted. The enzyme catalyses Random hydrolysis of (1-&gt;4)-beta-D-mannosidic linkages in mannans, galactomannans and glucomannans.. Its function is as follows. Involved in the degradation of glucomannan. Catalyzes the endo hydrolysis of beta-1,4-linked mannan, galactomannan and glucomannan. In Bacillus subtilis, this protein is Mannan endo-1,4-beta-mannosidase.